Here is a 65-residue protein sequence, read N- to C-terminus: Small ribosomal subunit protein bS21 (65 aa).

This sequence belongs to the bacterial ribosomal protein bS21 family.

The chain is Small ribosomal subunit protein bS21 from Geotalea daltonii (strain DSM 22248 / JCM 15807 / FRC-32) (Geobacter daltonii).